The following is a 379-amino-acid chain: Putative zinc metalloprotease BMEI0829 (379 aa).

Residue His33 coordinates Zn(2+). Glu34 is an active-site residue. His37 contacts Zn(2+). Transmembrane regions (helical) follow at residues 39–61 (LVAR…ELLG), 122–144 (VFAG…FALY), 305–327 (FDWL…LFPL), and 355–377 (IFYR…NDLF). The PDZ domain maps to 133-208 (TIAIFSVFFA…LNFTVERDGK (76 aa)).

It belongs to the peptidase M50B family. Requires Zn(2+) as cofactor.

It is found in the cell inner membrane. The chain is Putative zinc metalloprotease BMEI0829 from Brucella melitensis biotype 1 (strain ATCC 23456 / CCUG 17765 / NCTC 10094 / 16M).